The sequence spans 314 residues: Mitochondrial MRF1 N(5)-glutamine methyltransferase MTQ1 (314 aa).

Residues 118 to 122 (FTGTG), D141, and N188 contribute to the S-adenosyl-L-methionine site. 188 to 191 (NPPY) lines the substrate pocket.

The protein belongs to the protein N5-glutamine methyltransferase family.

Its subcellular location is the mitochondrion. It catalyses the reaction L-glutaminyl-[peptide chain release factor] + S-adenosyl-L-methionine = N(5)-methyl-L-glutaminyl-[peptide chain release factor] + S-adenosyl-L-homocysteine + H(+). In terms of biological role, methylates MRF1 on 'Gln-287' using S-adenosyl L-methionine as methyl donor. This is Mitochondrial MRF1 N(5)-glutamine methyltransferase MTQ1 (MTQ1) from Saccharomyces cerevisiae (strain ATCC 204508 / S288c) (Baker's yeast).